The sequence spans 351 residues: tRNA-specific 2-thiouridylase MnmA (351 aa).

An ATP-binding site is contributed by 6 to 13 (ALSGGTDS). Residue cysteine 96 is the Nucleophile of the active site. Cysteine 96 and cysteine 193 form a disulfide bridge. Glycine 120 contributes to the ATP binding site. The tract at residues 143–145 (KDQ) is interaction with tRNA. Residue cysteine 193 is the Cysteine persulfide intermediate of the active site. The interaction with tRNA stretch occupies residues 298–299 (RY).

Belongs to the MnmA/TRMU family.

It is found in the cytoplasm. It carries out the reaction S-sulfanyl-L-cysteinyl-[protein] + uridine(34) in tRNA + AH2 + ATP = 2-thiouridine(34) in tRNA + L-cysteinyl-[protein] + A + AMP + diphosphate + H(+). Functionally, catalyzes the 2-thiolation of uridine at the wobble position (U34) of tRNA, leading to the formation of s(2)U34. The protein is tRNA-specific 2-thiouridylase MnmA of Nitratidesulfovibrio vulgaris (strain DSM 19637 / Miyazaki F) (Desulfovibrio vulgaris).